A 2194-amino-acid polypeptide reads, in one-letter code: Glutamate synthase [NADH], amyloplastic (2194 aa).

The transit peptide at 1–101 (MSNSLSLTFT…LYDPAFDKDS (101 aa)) directs the protein to the amyloplast. Cys-102 (nucleophile) is an active-site residue. In terms of domain architecture, Glutamine amidotransferase type-2 spans 102–503 (CGVGFVAELN…PGMMLLVDFE (402 aa)). The disordered stretch occupies residues 1021–1045 (GGKSNTGEGGEQPSRMEPLADGSRN). Position 1193–1250 (1193–1250 (LAETHQTLVANDLRGRTTLQTDGQLKTGRDVAIAALLGAEEYGFSTAPLITLGCIMMR)) interacts with FMN. Residues Cys-1246, Cys-1252, and Cys-1257 each contribute to the [3Fe-4S] cluster site. 1974–1988 (GGGDTGTDCIGTSIR) is a binding site for NAD(+).

This sequence belongs to the glutamate synthase family. In terms of assembly, monomer. [3Fe-4S] cluster is required as a cofactor. The cofactor is FAD. It depends on FMN as a cofactor. Expressed in infected cells in root nodules. Barely detected in roots and stems.

It localises to the plastid. The protein localises to the amyloplast. The catalysed reaction is 2 L-glutamate + NAD(+) = L-glutamine + 2-oxoglutarate + NADH + H(+). It participates in amino-acid biosynthesis; L-glutamate biosynthesis via GLT pathway; L-glutamate from 2-oxoglutarate and L-glutamine (NAD(+) route): step 1/1. Its pathway is energy metabolism; nitrogen metabolism. With respect to regulation, inhibited by malate, citrate, glutamate, NAD(+) and azaserine, but not by 2-2' dipyridil and N-ethylmaleimide. Required for the assimilation of symbiotically fixed nitrogen into amino acids in root nodules. This Medicago sativa (Alfalfa) protein is Glutamate synthase [NADH], amyloplastic.